The following is a 205-amino-acid chain: uncharacterized protein (205 aa).

Belongs to the IIV-6 170L family.

This is an uncharacterized protein from Invertebrate iridescent virus 3 (IIV-3).